A 549-amino-acid polypeptide reads, in one-letter code: Cation/acetate symporter ActP (549 aa).

Transmembrane regions (helical) follow at residues 33–53 (WQAI…TYWA), 77–97 (LAIA…ALVF), 103–123 (GLIY…LIAE), 148–168 (ILSA…QMVG), 183–203 (IAVV…GMLA), 206–226 (WVQI…AFMV), 262–282 (ISAL…PHIL), 303–323 (GFMG…IMLV), 355–375 (LFLG…VAGL), 404–424 (VSKI…ILFE), 428–448 (IAFM…PIIL), 464–484 (GGWL…TIWV), and 493–513 (IFPY…GIWF).

This sequence belongs to the sodium:solute symporter (SSF) (TC 2.A.21) family.

The protein localises to the cell inner membrane. Its function is as follows. Transports acetate. The chain is Cation/acetate symporter ActP from Salmonella newport (strain SL254).